The chain runs to 272 residues: DNA repair protein RecO (272 aa).

The protein belongs to the RecO family.

Involved in DNA repair and RecF pathway recombination. The protein is DNA repair protein RecO of Latilactobacillus sakei subsp. sakei (strain 23K) (Lactobacillus sakei subsp. sakei).